Consider the following 226-residue polypeptide: EEF1A lysine methyltransferase 1 (226 aa).

S2 is subject to N-acetylserine. Phosphoserine is present on S2.

Belongs to the class I-like SAM-binding methyltransferase superfamily. EFM5 family.

The protein localises to the cytoplasm. It carries out the reaction L-lysyl-[protein] + 3 S-adenosyl-L-methionine = N(6),N(6),N(6)-trimethyl-L-lysyl-[protein] + 3 S-adenosyl-L-homocysteine + 3 H(+). Protein-lysine methyltransferase that selectively catalyzes the trimethylation of EEF1A at 'Lys-79'. In Bos taurus (Bovine), this protein is EEF1A lysine methyltransferase 1.